Consider the following 362-residue polypeptide: Porin Omp2b (362 aa).

A signal peptide spans 1-22 (MNIKSLLLGSAAALVAASGAQA).

It belongs to the alphaproteobacteria porin family. As to quaternary structure, homotrimer.

Its subcellular location is the cell outer membrane. In terms of biological role, forms passive diffusion pores that allow small molecular weight hydrophilic materials across the outer membrane. This is Porin Omp2b (omp2b) from Brucella canis (strain ATCC 23365 / NCTC 10854 / RM-666).